A 333-amino-acid chain; its full sequence is D-glutamate N-acetyltransferase (333 aa).

The protein belongs to the N-acetyltransferase DgcN family.

The enzyme catalyses D-glutamate + acetyl-CoA = N-acetyl-D-glutamate + CoA + H(+). Its pathway is amino-acid degradation. In terms of biological role, N-acetyltransferase involved in a deamination-independent D-glutamate degradation pathway, named the DgcN-DgcA pathway. Catalyzes the transfer of the acetyl moiety from acetyl-CoA to D-glutamate to generate N-acetyl-D-glutamate. This chain is D-glutamate N-acetyltransferase, found in Tritonibacter scottomollicae (Epibacterium scottomollicae).